A 93-amino-acid chain; its full sequence is Small ribosomal subunit protein bS18 (93 aa).

This sequence belongs to the bacterial ribosomal protein bS18 family. Part of the 30S ribosomal subunit. Forms a tight heterodimer with protein bS6.

In terms of biological role, binds as a heterodimer with protein bS6 to the central domain of the 16S rRNA, where it helps stabilize the platform of the 30S subunit. This chain is Small ribosomal subunit protein bS18, found in Variovorax paradoxus (strain S110).